The chain runs to 460 residues: 3-isopropylmalate dehydratase large subunit (460 aa).

The [4Fe-4S] cluster site is built by cysteine 338, cysteine 398, and cysteine 401.

This sequence belongs to the aconitase/IPM isomerase family. LeuC type 1 subfamily. As to quaternary structure, heterodimer of LeuC and LeuD. The cofactor is [4Fe-4S] cluster.

The enzyme catalyses (2R,3S)-3-isopropylmalate = (2S)-2-isopropylmalate. The protein operates within amino-acid biosynthesis; L-leucine biosynthesis; L-leucine from 3-methyl-2-oxobutanoate: step 2/4. In terms of biological role, catalyzes the isomerization between 2-isopropylmalate and 3-isopropylmalate, via the formation of 2-isopropylmaleate. The chain is 3-isopropylmalate dehydratase large subunit from Streptococcus thermophilus (strain ATCC BAA-491 / LMD-9).